A 230-amino-acid chain; its full sequence is Urease accessory protein UreF (230 aa).

Belongs to the UreF family. In terms of assembly, ureD, UreF and UreG form a complex that acts as a GTP-hydrolysis-dependent molecular chaperone, activating the urease apoprotein by helping to assemble the nickel containing metallocenter of UreC. The UreE protein probably delivers the nickel.

Its subcellular location is the cytoplasm. Its function is as follows. Required for maturation of urease via the functional incorporation of the urease nickel metallocenter. This Cupriavidus metallidurans (strain ATCC 43123 / DSM 2839 / NBRC 102507 / CH34) (Ralstonia metallidurans) protein is Urease accessory protein UreF.